The following is an 81-amino-acid chain: Conotoxin Im6.1 (81 aa).

A signal peptide spans 1 to 20 (MSKLGVVLFTLLLLVPLVTP). A propeptide spanning residues 21–47 (ERDGGKWTMLAKNKKAMKRNLMDFITR) is cleaved from the precursor. Cystine bridges form between cysteine 49/cysteine 61, cysteine 54/cysteine 67, and cysteine 60/cysteine 76.

It belongs to the conotoxin M superfamily. As to expression, expressed by the venom duct.

The protein localises to the secreted. The chain is Conotoxin Im6.1 from Conus imperialis (Imperial cone).